The sequence spans 466 residues: Asparagine--tRNA ligase (466 aa).

This sequence belongs to the class-II aminoacyl-tRNA synthetase family. Homodimer.

The protein localises to the cytoplasm. It carries out the reaction tRNA(Asn) + L-asparagine + ATP = L-asparaginyl-tRNA(Asn) + AMP + diphosphate + H(+). The sequence is that of Asparagine--tRNA ligase from Xylella fastidiosa (strain Temecula1 / ATCC 700964).